Reading from the N-terminus, the 554-residue chain is MAAKDVRFSEDARHRMMHGVNVLADAVRVTLGPRGRNVVLEKSFGAPTITKDGVSVAKEIELKDRFENMGAQMVKEVASQTSDVAGDGTTTATVLAQSILREGMKAVAAGMNPMDLKRGVDKAVVAAVEELKKLSKPCEDSKAIGQVGTISANAEESVGKIIAEAMDKVGKEGVITVEEGSGLDNELEVVEGMQFDRGYLSPYFITDQQSMAADLDDPYILIHDKKISNIRDLLPVLESVAKAGKPLLVISEDVEGEALATLVVNTIRGIVKVCAVKAPGFGDRRKAMLEDIAVLTGGTVISEEVGLSLDKVTLDDLGRAKKITVNKENTTIVDGAGSADDIKARVEQVRIQIEEATSDYDKEKLQERVAKLAGGVAVIKVGAATEMEMKEKKARVEDALHATRAAVEEGVVPGGGVALIRALLGIKDLKGANHDQDVGINIARRAMEEPLRQIVNNSGEEASVIVNQIKGGEGNYGYNAATGEFGDMIAMGILDPTKVSRTALQNAASVAGLMITTEAMIAEAPKDEEASPGGAPGMGGGMGGMGGMGDMGMM.

ATP is bound by residues 30-33, K51, 87-91, G415, 479-481, and D495; these read TLGP, DGTTT, and NAA.

The protein belongs to the chaperonin (HSP60) family. Forms a cylinder of 14 subunits composed of two heptameric rings stacked back-to-back. Interacts with the co-chaperonin GroES.

The protein localises to the cytoplasm. It catalyses the reaction ATP + H2O + a folded polypeptide = ADP + phosphate + an unfolded polypeptide.. Together with its co-chaperonin GroES, plays an essential role in assisting protein folding. The GroEL-GroES system forms a nano-cage that allows encapsulation of the non-native substrate proteins and provides a physical environment optimized to promote and accelerate protein folding. This Nitrosococcus oceani (strain ATCC 19707 / BCRC 17464 / JCM 30415 / NCIMB 11848 / C-107) protein is Chaperonin GroEL.